The chain runs to 366 residues: Flagellar P-ring protein (366 aa).

An N-terminal signal peptide occupies residues 1 to 24 (MWPLLLAVALSTLLPLAMPGSAGA).

The protein belongs to the FlgI family. In terms of assembly, the basal body constitutes a major portion of the flagellar organelle and consists of four rings (L,P,S, and M) mounted on a central rod.

Its subcellular location is the periplasm. The protein resides in the bacterial flagellum basal body. Functionally, assembles around the rod to form the L-ring and probably protects the motor/basal body from shearing forces during rotation. This chain is Flagellar P-ring protein, found in Nitratidesulfovibrio vulgaris (strain ATCC 29579 / DSM 644 / CCUG 34227 / NCIMB 8303 / VKM B-1760 / Hildenborough) (Desulfovibrio vulgaris).